Here is a 467-residue protein sequence, read N- to C-terminus: Siroheme synthase 2 (467 aa).

The precorrin-2 dehydrogenase /sirohydrochlorin ferrochelatase stretch occupies residues 1–204; sequence MDYLPIFCQL…NDVALAERQI (204 aa). Residues 22 to 23 and 43 to 44 contribute to the NAD(+) site; these read EI and CS. Ser128 carries the post-translational modification Phosphoserine. The tract at residues 216 to 467 is uroporphyrinogen-III C-methyltransferase; the sequence is GEVVLVGAGP…EPSQPLAQMA (252 aa). An S-adenosyl-L-methionine-binding site is contributed by Pro225. The Proton acceptor role is filled by Asp248. The active-site Proton donor is Lys270. S-adenosyl-L-methionine is bound by residues 301–303, Ile306, 331–332, Met382, and Gly411; these read GGD and TA.

The protein in the N-terminal section; belongs to the precorrin-2 dehydrogenase / sirohydrochlorin ferrochelatase family. In the C-terminal section; belongs to the precorrin methyltransferase family.

It catalyses the reaction uroporphyrinogen III + 2 S-adenosyl-L-methionine = precorrin-2 + 2 S-adenosyl-L-homocysteine + H(+). The enzyme catalyses precorrin-2 + NAD(+) = sirohydrochlorin + NADH + 2 H(+). It carries out the reaction siroheme + 2 H(+) = sirohydrochlorin + Fe(2+). It functions in the pathway cofactor biosynthesis; adenosylcobalamin biosynthesis; precorrin-2 from uroporphyrinogen III: step 1/1. Its pathway is cofactor biosynthesis; adenosylcobalamin biosynthesis; sirohydrochlorin from precorrin-2: step 1/1. It participates in porphyrin-containing compound metabolism; siroheme biosynthesis; precorrin-2 from uroporphyrinogen III: step 1/1. The protein operates within porphyrin-containing compound metabolism; siroheme biosynthesis; siroheme from sirohydrochlorin: step 1/1. It functions in the pathway porphyrin-containing compound metabolism; siroheme biosynthesis; sirohydrochlorin from precorrin-2: step 1/1. Functionally, multifunctional enzyme that catalyzes the SAM-dependent methylations of uroporphyrinogen III at position C-2 and C-7 to form precorrin-2 via precorrin-1. Then it catalyzes the NAD-dependent ring dehydrogenation of precorrin-2 to yield sirohydrochlorin. Finally, it catalyzes the ferrochelation of sirohydrochlorin to yield siroheme. The polypeptide is Siroheme synthase 2 (Serratia proteamaculans (strain 568)).